The following is a 291-amino-acid chain: NAD kinase (291 aa).

The active-site Proton acceptor is the aspartate 72. Residues 72–73, 146–147, arginine 157, arginine 174, aspartate 176, 187–192, and glutamine 247 contribute to the NAD(+) site; these read DG, ND, and TAYSLS.

This sequence belongs to the NAD kinase family. It depends on a divalent metal cation as a cofactor.

Its subcellular location is the cytoplasm. The catalysed reaction is NAD(+) + ATP = ADP + NADP(+) + H(+). Functionally, involved in the regulation of the intracellular balance of NAD and NADP, and is a key enzyme in the biosynthesis of NADP. Catalyzes specifically the phosphorylation on 2'-hydroxyl of the adenosine moiety of NAD to yield NADP. The sequence is that of NAD kinase from Hydrogenovibrio crunogenus (strain DSM 25203 / XCL-2) (Thiomicrospira crunogena).